The following is a 447-amino-acid chain: Pup--protein ligase 2 (447 aa).

Glu4 contributes to the Mg(2+) binding site. Arg48 is an ATP binding site. Mg(2+) is bound at residue Tyr50. Catalysis depends on Asp52, which acts as the Proton acceptor. Glu58 provides a ligand contact to Mg(2+). ATP is bound by residues Thr61 and Trp414.

It belongs to the Pup ligase/Pup deamidase family. Pup-conjugating enzyme subfamily.

It catalyses the reaction ATP + [prokaryotic ubiquitin-like protein]-L-glutamate + [protein]-L-lysine = ADP + phosphate + N(6)-([prokaryotic ubiquitin-like protein]-gamma-L-glutamyl)-[protein]-L-lysine.. Its pathway is protein degradation; proteasomal Pup-dependent pathway. It participates in protein modification; protein pupylation. Its function is as follows. Catalyzes the covalent attachment of the prokaryotic ubiquitin-like protein modifier Pup to the proteasomal substrate proteins, thereby targeting them for proteasomal degradation. This tagging system is termed pupylation. The ligation reaction involves the side-chain carboxylate of the C-terminal glutamate of Pup and the side-chain amino group of a substrate lysine. This is Pup--protein ligase 2 from Rhodococcus erythropolis (Arthrobacter picolinophilus).